We begin with the raw amino-acid sequence, 489 residues long: Coiled-coil domain-containing protein 77 (489 aa).

Phosphoserine is present on Ser-38. 2 coiled-coil regions span residues 57-120 (SQEL…QVCL) and 212-487 (ERHQ…NALR).

The chain is Coiled-coil domain-containing protein 77 (Ccdc77) from Mus musculus (Mouse).